Here is a 142-residue protein sequence, read N- to C-terminus: MVSKADNSAKLVEGKAKPMGSFPHVKRAGDFLFVSGTSSRRPDNTFVGAEPDDTGRPRPNIELQTREVISNIRDILQSVGADLGDVVEVCSYLVNMNDFAAYNKVYAEFFDATGPARTTVAVHQLPHPQLVIEIKVVAYKPL.

This sequence belongs to the 2-aminomuconate deaminase family. In terms of assembly, homotetramer.

It catalyses the reaction (2Z,4E)-2-aminomuconate + H2O = (3E)-2-oxohex-3-enedioate + NH4(+). Its activity is regulated as follows. Slightly inhibited by Pb(2+), Hg(+) and Cu(2+). In terms of biological role, involved in the modified meta-cleavage pathway for the 2-aminophenol catabolism. Only active toward 2-aminomuconic acid. This chain is 2-aminomuconate deaminase (amnD), found in Pseudomonas sp.